The chain runs to 314 residues: Homeobox protein SIX3 (314 aa).

The segment at residues 188–247 (GEQKTHCFKERTRSLLREWYLQDPYPNPSKKRELAQATGLTPTQVGNWFKNRRQRDRAAA) is a DNA-binding region (homeobox). 2 disordered regions span residues 214–233 (NPSK…TQVG) and 240–314 (RQRD…ECDV). The segment covering 271 to 293 (PTHSSAESPSTAASPTTSVSSLT) has biased composition (low complexity). Polar residues predominate over residues 298 to 314 (TGTSILSVTSSDSECDV).

Belongs to the SIX/Sine oculis homeobox family.

The protein localises to the nucleus. In terms of biological role, transcriptional regulator which can act as both a transcriptional repressor and activator by binding a ATTA homeodomain core recognition sequence on these target genes. During forebrain development represses WNT1 expression allowing zona limitans intrathalamica formation and thereby ensuring proper anterio-posterior patterning of the diencephalon and formation of the rostral diencephalon. Acts as a direct upstream activator of SHH expression in the rostral diencephalon ventral midline and that in turn SHH maintains its expression. In addition, Six3 activity is required for the formation of the telencephalon. During postnatal stages of brain development is necessary for ependymal cell maturation by promoting the maturation of radial glia into ependymal cells through regulation of neuroblast proliferation and migration. Acts on the proliferation and differentiation of neural progenitor cells through activating transcription of CCND1 and CCND2. During early lens formation plays a role in lens induction and specification by activating directly PAX6 in the presumptive lens ectoderm. In turn PAX6 activates SIX3 resulting in activation of PDGFRA and CCND1 promoting cell proliferation. Also is required for the neuroretina development by directly suppressing WNT8B expression in the anterior neural plate territory. Its action during retina development and lens morphogenesis is AES and TLE4-dependent manner. Furthermore, during eye development regulates several genes expression. Before and during early lens development represses the CRYGF promoter by binding a SIX repressor element. Directly activates RHO transcription, or cooperates with CRX or NRL. Six3 also functions in the formation of the proximodistal axis of the optic cup, and promotes the formation of optic vesicles-like structures. During pituitary development, acts in parallel or alternatively with HESX1 to control cell proliferation through Wnt/beta-catenin pathway. Plays a role in eye development by suppressing WNT1 expression and in dorsal-ventral patterning by repressing BMP signaling pathway. The chain is Homeobox protein SIX3 (SIX3) from Gallus gallus (Chicken).